The sequence spans 181 residues: Adenine phosphoribosyltransferase (181 aa).

This sequence belongs to the purine/pyrimidine phosphoribosyltransferase family. In terms of assembly, homodimer.

Its subcellular location is the cytoplasm. The enzyme catalyses AMP + diphosphate = 5-phospho-alpha-D-ribose 1-diphosphate + adenine. It participates in purine metabolism; AMP biosynthesis via salvage pathway; AMP from adenine: step 1/1. In terms of biological role, catalyzes a salvage reaction resulting in the formation of AMP, that is energically less costly than de novo synthesis. In Brucella abortus (strain S19), this protein is Adenine phosphoribosyltransferase.